We begin with the raw amino-acid sequence, 789 residues long: MLLAAMCLALLGCLQAQELKGHVSIILLGATGDLAKKYLWQGLFQLYLDEAGKGHSFSFHGAALTAPQQGQKLMDKVLESLSCPKDLVPSRCDELKGQFLQLSQYRQLKTVEDYQTLNKDIETQVQQDGLWEAGRIFYFSVPPFAYADIARNINSSCRPHPGAWLRVVFEKPFGHDHLSAQQLASELGSFFQEEEMYRVDHYLGKQAVAQILPFRDQNRKALDGLWNRHHVERVEIILKETIDAEGRASFYEEYGVIRDTLQNHLTEILTLVAMELPLNISSSAAVLQHKLWAFQALRGLQKSSAILGQYQAYSGQVRRELQKPDGFQSLTPTFAGVLVHIDNLRWEGVPFILMSGKALDERVGYVRIVFKNRAYCTQSERHWVPEQSRCLPQQIIFYIGHGELGHPAILVSRNLFKPSLPTQKWKEVQDQPGLRLFGRPLSDYYAYRPVREQDAYSTLLSHIFHCRKESFITTENLLASWVFWTPLLDSLAFEVPRPYPGGAENGQLLDFEFSGGQLTFSQQQLEVLIPDLGSVPKPSDFQVLGARYRQSPLITAWPEELISKLASDIEAAAVQAVRHFGKFHLALSGGSSPIALFQQLATGHYSFPWAHTHLWLVDERCVPLSDPDSNFQGLQAHLLQHVRVPYYNIHPMPVHLHQRLCAEEDQGAQTYASEISALVANSSFDLVLLGMGTDGHTASLFPQSPTGLDGDQLVVLTESPFRPHQRMSLSLPLINRAKKVAVLVMGRTKREITTLVSRVGHEPKKWPISGVVPLSGQLVWYMDYEAFLG.

The N-terminal stretch at 1–16 (MLLAAMCLALLGCLQA) is a signal peptide. Q17 is modified (pyrrolidone carboxylic acid). The hexose-6-phosphate dehydrogenase stretch occupies residues 17-524 (QELKGHVSII…GGQLTFSQQQ (508 aa)). Residues 29–36 (GATGDLAK) and Y146 contribute to the NADP(+) site. N-linked (GlcNAc...) asparagine glycosylation occurs at N154. K171 lines the NADP(+) pocket. D-glucose 6-phosphate-binding positions include K171, 201–205 (HYLGK), E240, and D259. K205 carries the N6-succinyllysine modification. H264 functions as the Proton acceptor in the catalytic mechanism. The N-linked (GlcNAc...) asparagine glycan is linked to N279. Residues K357 and R362 each coordinate D-glucose 6-phosphate. R367 is an NADP(+) binding site. K424 carries the N6-succinyllysine modification. The segment at 525–538 (LEVLIPDLGSVPKP) is linker. Residues 539 to 789 (SDFQVLGARY…WYMDYEAFLG (251 aa)) are 6-phosphogluconolactonase. W615 is a binding site for NADP(+). N-linked (GlcNAc...) asparagine glycosylation occurs at N681.

This sequence in the N-terminal section; belongs to the glucose-6-phosphate dehydrogenase family. It in the C-terminal section; belongs to the glucosamine/galactosamine-6-phosphate isomerase family. 6-phosphogluconolactonase subfamily. As to quaternary structure, homodimer. Expressed in liver (at protein level). Expressed in muscles. Expressed in adipose tissues.

The protein localises to the endoplasmic reticulum lumen. The enzyme catalyses D-glucose 6-phosphate + NAD(+) = 6-phospho-D-glucono-1,5-lactone + NADH + H(+). It catalyses the reaction D-glucose 6-phosphate + NADP(+) = 6-phospho-D-glucono-1,5-lactone + NADPH + H(+). The catalysed reaction is 6-phospho-D-glucono-1,5-lactone + H2O = 6-phospho-D-gluconate + H(+). It carries out the reaction 2-deoxy-D-glucose 6-phosphate + NAD(+) = 2-deoxy-6-phospho-D-glucono-1,5-lactone + NADH + H(+). The enzyme catalyses 2-deoxy-D-glucose 6-phosphate + NADP(+) = 2-deoxy-6-phospho-D-glucono-1,5-lactone + NADPH + H(+). It catalyses the reaction D-galactose 6-phosphate + NADP(+) = 6-phospho-D-galactono-1,5-lactone + NADPH + H(+). The catalysed reaction is D-galactose 6-phosphate + NAD(+) = 6-phospho-D-galactono-1,5-lactone + NADH + H(+). It carries out the reaction D-glucosamine 6-phosphate + NADP(+) = 2-amino-2-deoxy-6-phospho-D-glucono-1,5-lactone + NADPH + 2 H(+). The enzyme catalyses D-glucose + NAD(+) = D-glucono-1,5-lactone + NADH + H(+). It catalyses the reaction D-glucose + NADP(+) = D-glucono-1,5-lactone + NADPH + H(+). The catalysed reaction is D-glucose 6-sulfate + NADP(+) = 6-sulfo-D-glucono-1,5-lactone + NADPH + H(+). Its pathway is carbohydrate degradation; pentose phosphate pathway; D-ribulose 5-phosphate from D-glucose 6-phosphate (oxidative stage). It functions in the pathway carbohydrate degradation; pentose phosphate pathway; D-ribulose 5-phosphate from D-glucose 6-phosphate (oxidative stage): step 2/3. In terms of biological role, bifunctional enzyme localized in the lumen of the endoplasmic reticulum that catalyzes the first two steps of the oxidative branch of the pentose phosphate pathway/shunt, an alternative to glycolysis and a major source of reducing power and metabolic intermediates for biosynthetic processes. Has a hexose-6-phosphate dehydrogenase activity, with broad substrate specificity compared to glucose-6-phosphate 1-dehydrogenase/G6PD, and catalyzes the first step of the pentose phosphate pathway. In addition, acts as a 6-phosphogluconolactonase and catalyzes the second step of the pentose phosphate pathway. May have a dehydrogenase activity for alternative substrates including glucosamine 6-phosphate and glucose 6-sulfate. The main function of this enzyme is to provide reducing equivalents such as NADPH to maintain the adequate levels of reductive cofactors in the oxidizing environment of the endoplasmic reticulum. By producing NADPH that is needed by reductases of the lumen of the endoplasmic reticulum like corticosteroid 11-beta-dehydrogenase isozyme 1/HSD11B1, indirectly regulates their activity. The chain is GDH/6PGL endoplasmic bifunctional protein from Mus musculus (Mouse).